Reading from the N-terminus, the 360-residue chain is Cytokine receptor-like factor 2 (360 aa).

Positions 1–18 (MRAVTWAIVAMLLPRVLG) are cleaved as a signal peptide. Residues 27–238 (TGGVGDTLSV…PRTPGTPTPP (212 aa)) lie on the Extracellular side of the membrane. N-linked (GlcNAc...) asparagine glycosylation occurs at Asn-62. The cysteines at positions 77 and 90 are disulfide-linked. The Fibronectin type-III domain maps to 123 to 214 (RPRPPWNVTL…PSKWTGVASL (92 aa)). N-linked (GlcNAc...) asparagine glycosylation is found at Asn-129 and Asn-174. Residues Cys-185 and Cys-223 are joined by a disulfide bond. The WSXWS motif signature appears at 205 to 209 (PSKWT). A helical membrane pass occupies residues 239–259 (LALACGLAVALLTLVLLLALL). Residues 260-360 (RMRRVKEALL…LMGDSGYTTL (101 aa)) are Cytoplasmic-facing. The Box 1 motif signature appears at 268–276 (LLPGVPDPR).

It belongs to the type I cytokine receptor family. Type 5 subfamily. In terms of assembly, heterodimer of CRLF2 and IL7R. Expressed in all tissues examined including brain, thymus, lung, heart, muscle, stomach, small intestine, liver, kidney, spleen, testis and skin. Highest levels in thymus, liver and testis.

The protein localises to the membrane. Its function is as follows. Receptor for thymic stromal lymphopoietin (TSLP). Forms a functional complex with TSLP and IL7R which is capable of stimulating cell proliferation through activation of STAT3 and STAT5. Also activates JAK2. Implicated in the development of the hematopoietic system. In Rattus norvegicus (Rat), this protein is Cytokine receptor-like factor 2 (Crlf2).